Consider the following 363-residue polypeptide: Isopentenyl-diphosphate delta-isomerase (363 aa).

Position 15 to 16 (15 to 16) interacts with substrate; the sequence is RK. FMN contacts are provided by residues Ser-73, 74-76, Ser-104, and Asn-133; that span reads SMT. A substrate-binding site is contributed by 104-106; sequence SMR. Gln-168 is a binding site for substrate. Glu-169 serves as a coordination point for Mg(2+). Residues Lys-200, Thr-230, and 313–314 contribute to the FMN site; that span reads AG.

This sequence belongs to the IPP isomerase type 2 family. In terms of assembly, homooctamer. Dimer of tetramers. It depends on FMN as a cofactor. NADPH serves as cofactor. Mg(2+) is required as a cofactor.

It localises to the cytoplasm. It carries out the reaction isopentenyl diphosphate = dimethylallyl diphosphate. Its function is as follows. Involved in the biosynthesis of isoprenoids. Catalyzes the 1,3-allylic rearrangement of the homoallylic substrate isopentenyl (IPP) to its allylic isomer, dimethylallyl diphosphate (DMAPP). This Chlorobium phaeobacteroides (strain DSM 266 / SMG 266 / 2430) protein is Isopentenyl-diphosphate delta-isomerase.